A 492-amino-acid chain; its full sequence is WD repeat-containing protein JIP5 (492 aa).

WD repeat units lie at residues 127-166 (RHKG…VVKK), 178-217 (KKND…LSNS), 236-274 (RSAY…ILIS), 276-317 (DQED…LEDQ), and 365-405 (RNHN…VEEN). 2 stretches are compositionally biased toward acidic residues: residues 404-414 (ENASVESDSDE) and 422-433 (DLSDDTSSDDET). The disordered stretch occupies residues 404-472 (ENASVESDSD…SKSVKKRKIM (69 aa)). The segment covering 449–462 (KDLKEDHQEEKESN) has biased composition (basic and acidic residues).

Belongs to the WD repeat WDR55 family. Interacts with BRE1, BUD27 and GIS1.

It is found in the nucleus. Its subcellular location is the nucleolus. In Saccharomyces cerevisiae (strain YJM789) (Baker's yeast), this protein is WD repeat-containing protein JIP5 (JIP5).